The primary structure comprises 314 residues: Homoserine O-succinyltransferase (314 aa).

The Acyl-thioester intermediate role is filled by C142. Substrate is bound by residues K163 and S192. H235 functions as the Proton acceptor in the catalytic mechanism. Residue E237 is part of the active site. R249 is a binding site for substrate.

This sequence belongs to the MetA family.

It localises to the cytoplasm. The enzyme catalyses L-homoserine + succinyl-CoA = O-succinyl-L-homoserine + CoA. It functions in the pathway amino-acid biosynthesis; L-methionine biosynthesis via de novo pathway; O-succinyl-L-homoserine from L-homoserine: step 1/1. Its function is as follows. Transfers a succinyl group from succinyl-CoA to L-homoserine, forming succinyl-L-homoserine. This Shewanella pealeana (strain ATCC 700345 / ANG-SQ1) protein is Homoserine O-succinyltransferase.